Reading from the N-terminus, the 156-residue chain is Peroxisomal membrane associated protein 20 (156 aa).

Residues 2–156 (VAVGSTLPKV…SSADKVLSSL (155 aa)) form the Thioredoxin domain. The active-site Cysteine sulfenic acid (-SOH) intermediate is the cysteine 43.

The protein belongs to the peroxiredoxin family. Prx5 subfamily. As to quaternary structure, homodimer; disulfide-linked, upon oxidation.

It is found in the cytoplasm. Its subcellular location is the nucleus. Its function is as follows. May act as a chaperone rather than a peroxidase. Has no thioredoxin-dependent peroxidase activity. Shows weak chaperone activity. This is Peroxisomal membrane associated protein 20 from Schizosaccharomyces pombe (strain 972 / ATCC 24843) (Fission yeast).